The sequence spans 510 residues: Maturase K (510 aa).

Belongs to the intron maturase 2 family. MatK subfamily.

It localises to the plastid. In terms of biological role, usually encoded in the trnK tRNA gene intron. Probably assists in splicing its own and other chloroplast group II introns. This Aneura mirabilis (Parasitic liverwort) protein is Maturase K.